Here is a 712-residue protein sequence, read N- to C-terminus: Frizzled-6 (712 aa).

A signal peptide spans 1–18 (MEMFTFLLTCVFLPFVRG). The FZ domain occupies 19 to 132 (HSLFTCEPIT…CDRLQYCDET (114 aa)). The Extracellular segment spans residues 19 to 201 (HSLFTCEPIT…SDELEFAKSF (183 aa)). Intrachain disulfides connect Cys24–Cys85, Cys32–Cys78, Cys69–Cys106, Cys95–Cys129, and Cys99–Cys123. Asn38 carries an N-linked (GlcNAc...) asparagine glycan. A helical membrane pass occupies residues 202–222 (IGIVSIFCLCATLFTFLTFLI). Topologically, residues 223–233 (DVKRFRYPERP) are cytoplasmic. The chain crosses the membrane as a helical span at residues 234–254 (IIYYSVCYSIVSLMYFIGFLL). Over 255–284 (GDRTACNKADEKLELGDTVVLGSQNKACTV) the chain is Extracellular. A helical transmembrane segment spans residues 285–305 (LFMFLYFFTMAGTVWWVILTI). Residues 306–324 (TWFLAAGRKWSCEAIEQKA) lie on the Cytoplasmic side of the membrane. Residues 325–345 (VWFHAVAWGIPGFLTVMLLAM) form a helical membrane-spanning segment. The Extracellular portion of the chain corresponds to 346-370 (NKVEGDNISGVCFVGLYDLDASRYF). Asn352 is a glycosylation site (N-linked (GlcNAc...) asparagine). A helical membrane pass occupies residues 371 to 391 (VLLPLCLCVFVGLSLLLAGII). Over 392–416 (SLNHVRQVIQHDGRNQEKLKKFMIR) the chain is Cytoplasmic. A helical membrane pass occupies residues 417–437 (IGVFSGLYLVPLVTLLGCYVY). Topologically, residues 438–473 (EQVNRITWEITWVSDHCRQYHIPCPYQAKTETRPEL) are extracellular. Residues 474 to 494 (ALFMIKYLMTLIVGISAVFWV) form a helical membrane-spanning segment. At 495–712 (GSKKTCTEWA…EHGTGSHSDT (218 aa)) the chain is on the cytoplasmic side. The Lys-Thr-X-X-X-Trp motif, mediates interaction with the PDZ domain of Dvl family members signature appears at 498–503 (KTCTEW). The segment at 588-712 (EIQTSPETSV…EHGTGSHSDT (125 aa)) is disordered. 2 stretches are compositionally biased toward basic and acidic residues: residues 628–637 (LCEEQADRKG) and 652–664 (TRSE…KSDV). A compositionally biased stretch (polar residues) spans 668 to 693 (GPMQSSSLQVPGSSEPGSLKGSTSLL). Over residues 700–712 (GRKEHGTGSHSDT) the composition is skewed to basic and acidic residues.

This sequence belongs to the G-protein coupled receptor Fz/Smo family. Interacts with LMBR1L. Post-translationally, ubiquitinated by ZNRF3, leading to its degradation by the proteasome.

The protein localises to the membrane. Its subcellular location is the cell membrane. It localises to the cell surface. It is found in the apical cell membrane. The protein resides in the cytoplasmic vesicle membrane. The protein localises to the endoplasmic reticulum membrane. In terms of biological role, receptor for Wnt proteins. Most of frizzled receptors are coupled to the beta-catenin canonical signaling pathway, which leads to the activation of disheveled proteins, inhibition of GSK-3 kinase, nuclear accumulation of beta-catenin and activation of Wnt target genes. A second signaling pathway involving PKC and calcium fluxes has been seen for some family members, but it is not yet clear if it represents a distinct pathway or if it can be integrated in the canonical pathway, as PKC seems to be required for Wnt-mediated inactivation of GSK-3 kinase. Both pathways seem to involve interactions with G-proteins. Activation by Wnt5A stimulates PKC activity via a G-protein-dependent mechanism. Involved in transduction and intercellular transmission of polarity information during tissue morphogenesis and/or in differentiated tissues. Together with FZD3, is involved in the neural tube closure and plays a role in the regulation of the establishment of planar cell polarity (PCP), particularly in the orientation of asymmetric bundles of stereocilia on the apical faces of a subset of auditory and vestibular sensory cells located in the inner ear. This is Frizzled-6 (FZD6) from Canis lupus familiaris (Dog).